The sequence spans 569 residues: Ribonuclease J (569 aa).

Zn(2+) is bound by residues H81, H83, D85, H86, H150, and D172. Substrate is bound at residue 373-377 (HASGH). H399 contacts Zn(2+).

The protein belongs to the metallo-beta-lactamase superfamily. RNA-metabolizing metallo-beta-lactamase-like family. Bacterial RNase J subfamily. As to quaternary structure, homodimer, may be a subunit of the RNA degradosome. Requires Zn(2+) as cofactor.

Its subcellular location is the cytoplasm. Functionally, an RNase that has 5'-3' exonuclease and possibly endoonuclease activity. Involved in maturation of rRNA and in some organisms also mRNA maturation and/or decay. The chain is Ribonuclease J from Mycoplasma genitalium (strain ATCC 33530 / DSM 19775 / NCTC 10195 / G37) (Mycoplasmoides genitalium).